Consider the following 191-residue polypeptide: MEAKKIYAQALTDEAFAPFGSVVQQKDDVKMVSANGGTAKKYLKVSESIQNYEKSSSASTRKGVWNFFSTHPSVHPANDEHAAFQISVLERHPFTTQTFIPMCRSSDEQAYLIAVAPNAPDGMPDWNQTQAFVAKGAQGVTYSAGVWHAPMVTIGKETMLAAFNYENGVAEDDCQVQSTESPIEVFIKIST.

This sequence belongs to the ureidoglycolate lyase family. Homodimer.

It carries out the reaction (S)-ureidoglycolate = urea + glyoxylate. It participates in nitrogen metabolism; (S)-allantoin degradation. In terms of biological role, catalyzes the catabolism of the allantoin degradation intermediate (S)-ureidoglycolate, generating urea and glyoxylate. Involved in the utilization of allantoin as secondary nitrogen source when primary sources are limiting. In Schizosaccharomyces pombe (strain 972 / ATCC 24843) (Fission yeast), this protein is Ureidoglycolate lyase.